Consider the following 273-residue polypeptide: MPPRKAHTTRRTPAKKSGVRRRLLRLLVTGVPVLALCGVAWLWLESVRLTRIEIVGARQADPGELRRLAAVDSGAALFDLDPALIADRVARHPWVQAASVTRWPTGTLRIAVEERVPVVLQMDAGGRPLRYLDAEGYGMPPGRGPVPDVPLLYGVRGPAHPMRPLEDEPVRALLTTLAALEDPARALISEIVRAPDGEFWLYTTPAAGQRSVPVRLGREDFERRLRRLVAFWQQAVLTQPHKTFSLIDLRFANQIVVREEAHPSTQKSAMGHE.

Over 1-20 the chain is Cytoplasmic; it reads MPPRKAHTTRRTPAKKSGVR. A helical membrane pass occupies residues 21–43; that stretch reads RRLLRLLVTGVPVLALCGVAWLW. Residues 44–273 lie on the Periplasmic side of the membrane; sequence LESVRLTRIE…STQKSAMGHE (230 aa). Positions 47 to 115 constitute a POTRA domain; the sequence is VRLTRIEIVG…GTLRIAVEER (69 aa).

This sequence belongs to the FtsQ/DivIB family. FtsQ subfamily.

The protein localises to the cell inner membrane. Essential cell division protein. This is Cell division protein FtsQ from Rhodothermus marinus (strain ATCC 43812 / DSM 4252 / R-10) (Rhodothermus obamensis).